We begin with the raw amino-acid sequence, 1436 residues long: Probable deoxyribonuclease RhsB (1436 aa).

Residues 16-42 (HAGNRPNPPADRPQPCQGKPPTSPGKT) are disordered. Helical transmembrane passes span 48-68 (FLGALAGAVAGALVAAAVAAA) and 70-90 (VFLVGVTGGLAVAAVGALAVF). 5 YD repeats span residues 486 to 521 (YNTAHRLTRWHDNDQTWARYEYDAQGRCVYTTCADG), 569 to 605 (YDEVGNLLREISPAGRVVEFTYLDDTGRVSTFTDGSG), 612 to 647 (YDDAQRLCGVTDPLGREWGWVYDAEGNPERLTGPDA), 766 to 799 (DLLTARTDAEGRTWRYEYDRESQQLIAVTAPDGS), and 847 to 879 (YDARGLLLRETAPDDTLHYRYDAAGRLTEVSSA).

This sequence belongs to the RHS/WapA nuclease family.

The protein resides in the membrane. In terms of biological role, toxic component of a toxin-immunity protein module, which functions as a cellular contact-dependent growth inhibition (CDI) system. This protein may be a nuclease that is specifically inhibited by its cognate immunity protein RhsBI. Upon expression of the C-terminus (residues 1284-1436) in E.coli growth is inhibited, cells elongate, nucleoids condense and plasmid DNA is degraded; these effects are blocked specifically by cognate immunity protein RshIB. Cell contact is necessary for growth inhibition. This is Probable deoxyribonuclease RhsB (rhsB) from Dickeya dadantii (strain 3937) (Erwinia chrysanthemi (strain 3937)).